The following is an 837-amino-acid chain: MLKKASAFLIASCCVMSLAWAQANDNWYEGKPISAISFEGLEYIARGQLDTIFSQYKGQKWTYELYLEILQKVYDLEYFSEVSPKAVPTDPEYQYVMLQFTVKERPSVKGIKMVGNSQIRSGDLLSKILLKKGDIYNEVKMKVDQESLRRHYLDQGYAAVKISCEAKTEAGGVVVQFTIQEGKQTVVSRIQFKGNKAFTESVLKKVLSTQEARFLTSGVFKENALEADKAAVHSYYAERGYIDARVEGVAKTVDKKTDASRNLVTLTYTVVEGEQYRYGGVTIVGNQIFSTEELQAKIRLKRGAIMNMVAFEQGFQALADAYFENGYTSNYLNKEEHRDTAEKTLSFKITVVERERSHVEHIIIKGTKNTKDEVILREMLLKPGDVFSKSKFTDSLRNLFNLRYFSSLVPDVRPGSEQDLVDIILNVEEQSTANVQFGVTFSGVGEAGTFPLSLFCQWEEKNFLGKGNEISVNATLGSEAQSLKLGYVERWFLGSPLTVGFDFELTHKNLFVYRAGSYGNGLPHPYTSREQWASSPGLAESFRLKYSRFESAIGAHTGYQWYPRYAVIRVNGGVDFRVVKNFYDKDNNQPFDLTVKEQLNWTSINSFWTSVSFDGRDFAYDPSSGWFLGQRCTFNGLVPFLEKEHSFRSDTKAEFYVTLLNYPVSAVWNLKFVLAFYTGVSVQTYYGRRKSENGKGNGVRSGALVIDGVLVGRGWSEDAKKNTGDLLLHHWIEFRWPLAHGIVSFDFFFDAAMVYNIESQSPNGSSSASSSSSSSSSSSRTTSSEGLYKMSYGPGLRFTLPQFPLKLAFANTFTSPGGIPKTKKNWNFVLSFTVNNL.

The signal sequence occupies residues 1–21 (MLKKASAFLIASCCVMSLAWA). The Periplasmic segment spans residues 22 to 433 (QANDNWYEGK…ILNVEEQSTA (412 aa)). POTRA domains follow at residues 31–105 (KPIS…VKER), 106–182 (PSVK…IQEG), 185–273 (TVVS…VVEG), 276–354 (YRYG…VVER), and 357–430 (SHVE…VEEQ). Residues 434 to 442 (NVQFGVTFS) traverse the membrane as a beta stranded segment. Topologically, residues 443-450 (GVGEAGTF) are extracellular; loop L1. The chain crosses the membrane as a beta stranded span at residues 451–461 (PLSLFCQWEEK). At 462–468 (NFLGKGN) the chain is on the periplasmic side. A beta stranded membrane pass occupies residues 469 to 476 (EISVNATL). Over 477–478 (GS) the chain is Extracellular; loop L2. Residues 479 to 489 (EAQSLKLGYVE) traverse the membrane as a beta stranded segment. The Periplasmic portion of the chain corresponds to 490 to 499 (RWFLGSPLTV). The beta stranded transmembrane segment at 500–520 (GFDFELTHKNLFVYRAGSYGN) threads the bilayer. Topologically, residues 521–530 (GLPHPYTSRE) are extracellular; loop L3. A beta stranded transmembrane segment spans residues 531-543 (QWASSPGLAESFR). The Periplasmic segment spans residues 544–554 (LKYSRFESAIG). Residues 555–568 (AHTGYQWYPRYAVI) form a beta stranded membrane-spanning segment. Residues 569 to 601 (RVNGGVDFRVVKNFYDKDNNQPFDLTVKEQLNW) lie on the Extracellular; loop L4 side of the membrane. A beta stranded transmembrane segment spans residues 602 to 615 (TSINSFWTSVSFDG). Residues 616–623 (RDFAYDPS) lie on the Periplasmic side of the membrane. The beta stranded transmembrane segment at 624 to 636 (SGWFLGQRCTFNG) threads the bilayer. Residues 637-644 (LVPFLEKE) are Extracellular; loop L5-facing. The beta stranded transmembrane segment at 645–658 (HSFRSDTKAEFYVT) threads the bilayer. At 659–667 (LLNYPVSAV) the chain is on the periplasmic side. The beta stranded transmembrane segment at 668–682 (WNLKFVLAFYTGVSV) threads the bilayer. The Extracellular; loop L6 segment spans residues 683–724 (QTYYGRRKSENGKGNGVRSGALVIDGVLVGRGWSEDAKKNTG). A beta stranded membrane pass occupies residues 725–736 (DLLLHHWIEFRW). At 737–741 (PLAHG) the chain is on the periplasmic side. Residues 742 to 756 (IVSFDFFFDAAMVYN) traverse the membrane as a beta stranded segment. Residues 757–786 (IESQSPNGSSSASSSSSSSSSSSRTTSSEG) lie on the Extracellular; loop L7 side of the membrane. Positions 761–785 (SPNGSSSASSSSSSSSSSSRTTSSE) are disordered. Residues 765–784 (SSSASSSSSSSSSSSRTTSS) are compositionally biased toward low complexity. Residues 787–799 (LYKMSYGPGLRFT) traverse the membrane as a beta stranded segment. Residues 800–802 (LPQ) lie on the Periplasmic side of the membrane. A beta stranded transmembrane segment spans residues 803–814 (FPLKLAFANTFT). Over 815–824 (SPGGIPKTKK) the chain is Extracellular; loop L8. Residues 825–829 (NWNFV) traverse the membrane as a beta stranded segment. Residues 830–837 (LSFTVNNL) are Periplasmic-facing.

The protein belongs to the BamA family. As to quaternary structure, part of 2 complexes of about 239 and 164 kDa.

It is found in the cell outer membrane. Functionally, might be part of the outer membrane protein assembly complex, which is involved in assembly and insertion of beta-barrel proteins into the outer membrane. Both rabbit immune serum and rabbit antiserum specific for extracytoplasmic loop L4 promote bacteria internalization by rabbit peritoneal macrophages. Pools of human syphilitic sera from the USA and Columbia recognize both the N-terminal POTRA-containing and C-terminal beta-barrel domains as well as loop L4, showing this protein stimulates the immune system in both humans and rabbits. The protein is Putative outer membrane protein assembly factor TP_0326 (tp92) of Treponema pallidum (strain Nichols).